Consider the following 213-residue polypeptide: Oxidase ustYa (213 aa).

Residues 1 to 26 are disordered; it reads MAERSSNGYKEVPVRQSEESTIAEEE. Residues 48–68 form a helical membrane-spanning segment; it reads AVWFLIALLLLSNIGLLGGLI. Asn-98 carries an N-linked (GlcNAc...) asparagine glycan. Short sequence motifs (HXXHC) lie at residues 123-127 and 150-154; these read HQLHC and HLMHC.

Belongs to the ustYa family.

The protein localises to the membrane. The protein operates within mycotoxin biosynthesis. Functionally, oxidase; part of the gene cluster that mediates the biosynthesis of the secondary metabolite ustiloxin B, an antimitotic tetrapeptide. First, ustA is processed by the subtilisin-like endoprotease Kex2 that is outside the ustiloxin B gene cluster, at the C-terminal side of Arg-Lys, after transfer to Golgi apparatus through the endoplasmic reticulum (ER). Cleavage by KEX2 generates 16 peptides YAIG-I to YAIG-XVI. To process the precursor peptide further, at least two peptidases are necessary to cleave the N-terminal and C-terminal sides of the Tyr-Ala-Ile-Gly core peptide which serves as backbone for the synthesis of ustiloxin B, through cyclization and modification of the tyrosine with a non-protein coding amino acid, norvaline. One of the two peptidases must be the serine peptidase ustP; and the other pepdidase is probably ustH. Macrocyclization of the core peptide derived from ustA requires the tyrosinase ustQ, as well as the homologous oxidases ustYa and ustYb, and leads to the production of the first cyclization product N-desmethylustiloxin F. For the formation of N-desmethylustiloxin F, three oxidation steps are required, hydroxylation at the benzylic position, hydroxylation at either the aromatic ring of Tyr or beta-position of Ile, and oxidative cyclization. UstQ may catalyze the oxidation of a phenol moiety, whereas the ustYa and ustYb are most likely responsible for the remaining two-step oxidations. N-desmethylustiloxin F is then methylated by ustM to yield ustiloxin F which in turn substrate of the cytochrome P450 monooxygenase ustC which catalyzes the formation of S-deoxyustiloxin H. The flavoprotein monooxygenases ustF1 and ustF2 then participate in the modification of the side chain of S-deoxyustiloxin H, leading to the synthesis of an oxime intermediate, via ustiloxin H. Finally, carboxylative dehydration performed by the cysteine desulfurase-like protein ustD yields ustiloxin B. This is Oxidase ustYa from Aspergillus flavus (strain ATCC 200026 / FGSC A1120 / IAM 13836 / NRRL 3357 / JCM 12722 / SRRC 167).